Consider the following 337-residue polypeptide: MRVLGIETSCDETGIAIYDDEKGLLANQLYSQVKLHADYGGVVPELASRDHVRKTVPLIQAALKESGLTAKEIDAVAYTAGPGLVGALLVGATVGRSLAFAWNVPAIPVHHMEGHLLAPMLEDNPPEFPFVALLVSGGHTQLISVTGIGQYALLGESIDDAAGEAFDKTAKLLGLDYPGGPMLSKMAAQGTAGRFVFPRPMTDRPGLDFSFSGLKTFAANTIRSNGDDEQTRADIARAFEDAVVDTLMIKCKRALDQTGFKRLVMAGGVSANRTLRAKLAEMMQKRRGEVFYARPEFCTDNGAMIAYAGMVRFKAGATADLGVSVLPRWPLAELPAA.

Positions 111 and 115 each coordinate Fe cation. Substrate is bound by residues 134–138 (LVSGG), aspartate 167, glycine 180, and asparagine 272. Aspartate 300 is a binding site for Fe cation.

It belongs to the KAE1 / TsaD family. Requires Fe(2+) as cofactor.

Its subcellular location is the cytoplasm. The enzyme catalyses L-threonylcarbamoyladenylate + adenosine(37) in tRNA = N(6)-L-threonylcarbamoyladenosine(37) in tRNA + AMP + H(+). Required for the formation of a threonylcarbamoyl group on adenosine at position 37 (t(6)A37) in tRNAs that read codons beginning with adenine. Is involved in the transfer of the threonylcarbamoyl moiety of threonylcarbamoyl-AMP (TC-AMP) to the N6 group of A37, together with TsaE and TsaB. TsaD likely plays a direct catalytic role in this reaction. The protein is tRNA N6-adenosine threonylcarbamoyltransferase of Citrobacter koseri (strain ATCC BAA-895 / CDC 4225-83 / SGSC4696).